A 246-amino-acid polypeptide reads, in one-letter code: ATP synthase subunit a (246 aa).

A propeptide spans 1-3 (MFY) (removed in mature form). A run of 7 helical transmembrane segments spans residues 20–40 (ILTL…SIIF), 56–76 (WGVA…SQIG), 82–102 (FFPL…ISMI), 112–132 (LVAI…LGLY), 138–158 (FFAL…LVLI), 176–196 (ANIL…VNLM), and 203–223 (FIGG…EVGI).

Belongs to the ATPase A chain family. F-type ATPases have 2 components, CF(1) - the catalytic core - and CF(0) - the membrane proton channel. CF(1) has five subunits: alpha(3), beta(3), gamma(1), delta(1), epsilon(1). CF(0) has three main subunits: a, b and c.

The protein localises to the mitochondrion inner membrane. In terms of biological role, mitochondrial membrane ATP synthase (F(1)F(0) ATP synthase or Complex V) produces ATP from ADP in the presence of a proton gradient across the membrane which is generated by electron transport complexes of the respiratory chain. F-type ATPases consist of two structural domains, F(1) - containing the extramembraneous catalytic core and F(0) - containing the membrane proton channel, linked together by a central stalk and a peripheral stalk. During catalysis, ATP synthesis in the catalytic domain of F(1) is coupled via a rotary mechanism of the central stalk subunits to proton translocation. Key component of the proton channel; it may play a direct role in the translocation of protons across the membrane. In Candida albicans (strain SC5314 / ATCC MYA-2876) (Yeast), this protein is ATP synthase subunit a (ATP6).